A 544-amino-acid polypeptide reads, in one-letter code: Chaperonin GroEL 2 (544 aa).

ATP is bound by residues 30–33 (TLGP), 87–91 (DGTTT), G415, 480–482 (NAA), and D496.

The protein belongs to the chaperonin (HSP60) family. In terms of assembly, forms a cylinder of 14 subunits composed of two heptameric rings stacked back-to-back. Interacts with the co-chaperonin GroES.

Its subcellular location is the cytoplasm. The catalysed reaction is ATP + H2O + a folded polypeptide = ADP + phosphate + an unfolded polypeptide.. Its function is as follows. Together with its co-chaperonin GroES, plays an essential role in assisting protein folding. The GroEL-GroES system forms a nano-cage that allows encapsulation of the non-native substrate proteins and provides a physical environment optimized to promote and accelerate protein folding. The sequence is that of Chaperonin GroEL 2 from Albidiferax ferrireducens (strain ATCC BAA-621 / DSM 15236 / T118) (Rhodoferax ferrireducens).